The primary structure comprises 242 residues: ATP-dependent dethiobiotin synthetase BioD (242 aa).

12–17 (EVGKTV) is a binding site for ATP. Thr16 provides a ligand contact to Mg(2+). Residue Lys37 is part of the active site. Ser41 is a binding site for substrate. ATP is bound by residues Asp51 and 112–115 (EGAG). Mg(2+)-binding residues include Asp51 and Glu112.

The protein belongs to the dethiobiotin synthetase family. As to quaternary structure, homodimer. Mg(2+) serves as cofactor.

It is found in the cytoplasm. The enzyme catalyses (7R,8S)-7,8-diammoniononanoate + CO2 + ATP = (4R,5S)-dethiobiotin + ADP + phosphate + 3 H(+). The protein operates within cofactor biosynthesis; biotin biosynthesis; biotin from 7,8-diaminononanoate: step 1/2. Its function is as follows. Catalyzes a mechanistically unusual reaction, the ATP-dependent insertion of CO2 between the N7 and N8 nitrogen atoms of 7,8-diaminopelargonic acid (DAPA, also called 7,8-diammoniononanoate) to form a ureido ring. The chain is ATP-dependent dethiobiotin synthetase BioD from Bacillus cereus (strain ATCC 14579 / DSM 31 / CCUG 7414 / JCM 2152 / NBRC 15305 / NCIMB 9373 / NCTC 2599 / NRRL B-3711).